A 230-amino-acid polypeptide reads, in one-letter code: DNA mismatch repair protein MutH (230 aa).

Belongs to the MutH family.

The protein localises to the cytoplasm. In terms of biological role, sequence-specific endonuclease that cleaves unmethylated GATC sequences. It is involved in DNA mismatch repair. This chain is DNA mismatch repair protein MutH, found in Enterobacter sp. (strain 638).